The sequence spans 611 residues: Chaperone protein DnaK (611 aa).

Residue threonine 173 is modified to Phosphothreonine; by autocatalysis. The span at 579–592 (AAGQAEGAQGAQDA) shows a compositional bias: low complexity. The disordered stretch occupies residues 579 to 598 (AAGQAEGAQGAQDAGAKKDN).

The protein belongs to the heat shock protein 70 family.

Its function is as follows. Acts as a chaperone. In Bacillus cereus (strain ATCC 10987 / NRS 248), this protein is Chaperone protein DnaK.